The following is a 501-amino-acid chain: MIMLIKVFVLLLVVYILHNSYKKYKKLDKNELKGPTPIPVLGNLHQLSSLPHRDLSKMTKDYGDIFRVWFADLYTVVISDPVLIRKIYVENHESFRDRPKIPSMKYGTYYHGTAASMGEDWVRNRGIVSSAMRKSNIKHIYEVINNQVDVLMSTMKKYEKRSEPFEPRYYMTKYTMAAMFKYIFNEDIGEDEDIHTGEIQKIMGPMNQVMEDFGTGSLFDVLEISQTFYLKWLELTEKNFPLLLKFFNGRYEQHLETIKPESPRDLLDILINEYGTNTHDDYLNIASTVLDFFFAGTDTSSTTLEYLFLMMANYPEIQDKVHQEVKSYLKQIGKDKVELNDRQSLPYVVAVIKETLRFKPVTPFGVPRSCVNEITIDEKYFIPKGAQVIINYPSIFENEKYFKNANQFDPSRFLQTTTTNTASNEESSFNSNLAFIPFSIGPRNCVGMQFAQDELFLAFANIVLNFTIKSVDGKKIDETISYGVTLKPKTRFKVLLEKRLI.

Residues 1 to 21 (MIMLIKVFVLLLVVYILHNSY) traverse the membrane as a helical segment. C445 contributes to the heme binding site.

Belongs to the cytochrome P450 family. Requires heme as cofactor.

The protein localises to the membrane. In Dictyostelium discoideum (Social amoeba), this protein is Probable cytochrome P450 508A4 (cyp508A4).